The following is a 475-amino-acid chain: Putative poly(A) polymerase catalytic subunit (475 aa).

The protein belongs to the poxviridae poly(A) polymerase catalytic subunit family. Highly divergent.

Its subcellular location is the virion. It catalyses the reaction RNA(n) + ATP = RNA(n)-3'-adenine ribonucleotide + diphosphate. In terms of biological role, polymerase that creates the 3'-poly(A) tail of mRNA's. The polypeptide is Putative poly(A) polymerase catalytic subunit (Ornithodoros (relapsing fever ticks)).